Consider the following 333-residue polypeptide: Anthranilate phosphoribosyltransferase (333 aa).

Residues Gly81, 84–85 (GD), Thr89, 91–94 (NIST), 109–117 (KHGNRSVSS), and Ala121 each bind 5-phospho-alpha-D-ribose 1-diphosphate. Gly81 contacts anthranilate. Ser93 provides a ligand contact to Mg(2+). Asn112 lines the anthranilate pocket. Arg167 contacts anthranilate. Residues Asp225 and Glu226 each coordinate Mg(2+).

It belongs to the anthranilate phosphoribosyltransferase family. As to quaternary structure, homodimer. Requires Mg(2+) as cofactor.

The enzyme catalyses N-(5-phospho-beta-D-ribosyl)anthranilate + diphosphate = 5-phospho-alpha-D-ribose 1-diphosphate + anthranilate. It participates in amino-acid biosynthesis; L-tryptophan biosynthesis; L-tryptophan from chorismate: step 2/5. Catalyzes the transfer of the phosphoribosyl group of 5-phosphorylribose-1-pyrophosphate (PRPP) to anthranilate to yield N-(5'-phosphoribosyl)-anthranilate (PRA). This chain is Anthranilate phosphoribosyltransferase, found in Haemophilus influenzae (strain 86-028NP).